The sequence spans 415 residues: Casein kinase 1-like protein 3 (415 aa).

The 269-residue stretch at 9–277 folds into the Protein kinase domain; the sequence is YKLGRKIGGG…FLKRLFRDLF (269 aa). ATP is bound by residues 15 to 23 and K38; that span reads IGGGSFGEI. The Proton acceptor role is filled by D128. Composition is skewed to polar residues over residues 303–314 and 373–415; these read NQSQAVPGSSNP and NMPS…SPEK. Disordered stretches follow at residues 303 to 330 and 344 to 415; these read NQSQ…GPNI and NAIG…SPEK.

The protein belongs to the protein kinase superfamily. CK1 Ser/Thr protein kinase family. Casein kinase I subfamily. Slightly autophosphorylated. Expressed in seedlings, stems, leaves and flowers.

It localises to the cytoplasm. The protein resides in the nucleus. The catalysed reaction is L-seryl-[protein] + ATP = O-phospho-L-seryl-[protein] + ADP + H(+). It carries out the reaction L-threonyl-[protein] + ATP = O-phospho-L-threonyl-[protein] + ADP + H(+). Functionally, protein kinase involved in blue light responses (e.g. hypocotyl elongation and flowering) by phosphorylating CRY2 to reduce its stability. This chain is Casein kinase 1-like protein 3, found in Arabidopsis thaliana (Mouse-ear cress).